A 430-amino-acid polypeptide reads, in one-letter code: 3-oxo-tetronate kinase (430 aa).

Residues S268, 366-369, and G410 contribute to the ATP site; that span reads GGET.

This sequence belongs to the four-carbon acid sugar kinase family.

It carries out the reaction 3-dehydro-L-erythronate + ATP = 3-dehydro-4-O-phospho-L-erythronate + ADP + H(+). The catalysed reaction is 3-dehydro-D-erythronate + ATP = 3-dehydro-4-O-phospho-D-erythronate + ADP + H(+). In terms of biological role, catalyzes the ATP-dependent phosphorylation of 3-oxo-tetronate to 3-oxo-tetronate 4-phosphate. In Pseudomonas fluorescens (strain ATCC BAA-477 / NRRL B-23932 / Pf-5), this protein is 3-oxo-tetronate kinase.